A 303-amino-acid polypeptide reads, in one-letter code: Probable phytol kinase, chloroplastic (303 aa).

The transit peptide at 1–49 directs the protein to the chloroplast; sequence MAAAAAWTGAASPNSLLLSRSPPHAAALAPSPGSSMRRRLLLGVGTPAV. A run of 6 helical transmembrane segments spans residues 98-118, 122-144, 168-188, 227-247, 254-274, and 276-296; these read VVHVLSGVLFMSSWPLFSNST, YFAAVVPFLNSMRLLIYGLRLYT, YVLVLLFSVLVFWRESPIGIV, FISGFLLSAMMMLYFSSLGYI, ALGKLALVALAATVVECVPVT, and VVDDNISVPLATMLVAFLLFS.

It belongs to the polyprenol kinase family.

It is found in the plastid. The protein resides in the chloroplast membrane. It catalyses the reaction phytol + CTP = phytyl phosphate + CDP + H(+). Its pathway is cofactor biosynthesis; tocopherol biosynthesis. Its function is as follows. Involved in the activation and reutilization of phytol from chlorophyll degradation in plant metabolism, including tocopherol biosynthesis. Catalyzes the conversion of phytol to phytol monophosphate (PMP). The sequence is that of Probable phytol kinase, chloroplastic from Zea mays (Maize).